The chain runs to 109 residues: uncharacterized protein (109 aa).

A helical membrane pass occupies residues 75–95; sequence MALFHTVFILWPHFCGILWTV.

It localises to the membrane. This is an uncharacterized protein from Saccharomyces cerevisiae (strain ATCC 204508 / S288c) (Baker's yeast).